The sequence spans 299 residues: ATP phosphoribosyltransferase (299 aa).

This sequence belongs to the ATP phosphoribosyltransferase family. Long subfamily. Requires Mg(2+) as cofactor.

The protein resides in the cytoplasm. The catalysed reaction is 1-(5-phospho-beta-D-ribosyl)-ATP + diphosphate = 5-phospho-alpha-D-ribose 1-diphosphate + ATP. It participates in amino-acid biosynthesis; L-histidine biosynthesis; L-histidine from 5-phospho-alpha-D-ribose 1-diphosphate: step 1/9. With respect to regulation, feedback inhibited by histidine. Its function is as follows. Catalyzes the condensation of ATP and 5-phosphoribose 1-diphosphate to form N'-(5'-phosphoribosyl)-ATP (PR-ATP). Has a crucial role in the pathway because the rate of histidine biosynthesis seems to be controlled primarily by regulation of HisG enzymatic activity. This is ATP phosphoribosyltransferase from Campylobacter jejuni subsp. jejuni serotype O:23/36 (strain 81-176).